The chain runs to 158 residues: Pyruvoyl-dependent arginine decarboxylase (158 aa).

A Pyruvic acid (Ser) modification is found at Ser-44.

The protein belongs to the PdaD family. Pyruvate is required as a cofactor.

The catalysed reaction is L-arginine + H(+) = agmatine + CO2. The sequence is that of Pyruvoyl-dependent arginine decarboxylase from Pyrococcus horikoshii (strain ATCC 700860 / DSM 12428 / JCM 9974 / NBRC 100139 / OT-3).